A 509-amino-acid chain; its full sequence is Maturase K (509 aa).

Belongs to the intron maturase 2 family. MatK subfamily.

It is found in the plastid. The protein resides in the chloroplast. Its function is as follows. Usually encoded in the trnK tRNA gene intron. Probably assists in splicing its own and other chloroplast group II introns. The sequence is that of Maturase K from Dalea purpurea (Violet prairie clover).